The following is a 363-amino-acid chain: Cyanuric acid amidohydrolase (363 aa).

The interval 1–103 is RU A; it reads MKTRVTRLTV…LVFEVDDSAP (103 aa). Substrate is bound by residues arginine 51 and 82–83; that span reads SG. Residues 111–247 are RU B; it reads GLAAGVAFTR…NEVLVLGNAP (137 aa). Lysine 161 is a catalytic residue. Substrate contacts are provided by residues arginine 193 and 230-231; that span reads SA. The active-site Nucleophile is the serine 230. Residues 253 to 363 form an RU C region; the sequence is YRIGHAVMED…GGPLALIVRS (111 aa). A Mg(2+)-binding site is contributed by glutamate 297. Substrate is bound by residues arginine 324 and 343 to 344; that span reads SG. Mg(2+) contacts are provided by alanine 346, glutamine 349, glycine 350, proline 351, and glycine 354.

Belongs to the cyclic amide hydrolase (CyAH) family. In terms of assembly, homotetramer.

The catalysed reaction is cyanurate + H2O = 1-carboxybiuret + H(+). Its pathway is xenobiotic degradation; atrazine degradation; biuret from cyanurate: step 1/1. Inhibited by barbituric acid. In terms of biological role, responsible for the hydrolysis of cyanuric acid, an intermediate formed during catabolism of s-triazine based compounds in herbicides such as atrazine and polymers such as melamine. Catalyzes the hydrolytic opening of the s-triazine ring of cyanuric acid (2,4,6-trihydroxy-s-triazine) to yield carbon dioxide and carboxybiuret, which spontaneously decarboxylates to biuret. The sequence is that of Cyanuric acid amidohydrolase from Ectopseudomonas oleovorans (strain CECT 5344) (Pseudomonas pseudoalcaligenes).